The chain runs to 103 residues: Large ribosomal subunit protein bL21 (103 aa).

It belongs to the bacterial ribosomal protein bL21 family. In terms of assembly, part of the 50S ribosomal subunit. Contacts protein L20.

This protein binds to 23S rRNA in the presence of protein L20. This is Large ribosomal subunit protein bL21 from Actinobacillus succinogenes (strain ATCC 55618 / DSM 22257 / CCUG 43843 / 130Z).